Here is a 394-residue protein sequence, read N- to C-terminus: Elongation factor Tu 2 (394 aa).

Residues 10-204 enclose the tr-type G domain; the sequence is KPHVNVGTIG…ALDSYIPEPE (195 aa). The segment at 19 to 26 is G1; that stretch reads GHVDHGKT. 19–26 lines the GTP pocket; that stretch reads GHVDHGKT. Threonine 26 contacts Mg(2+). The G2 stretch occupies residues 60-64; the sequence is GITIN. The G3 stretch occupies residues 81–84; that stretch reads DCPG. Residues 81–85 and 136–139 contribute to the GTP site; these read DCPGH and NKCD. The segment at 136 to 139 is G4; that stretch reads NKCD. Positions 174–176 are G5; that stretch reads SAL.

This sequence belongs to the TRAFAC class translation factor GTPase superfamily. Classic translation factor GTPase family. EF-Tu/EF-1A subfamily. In terms of assembly, monomer.

Its subcellular location is the cytoplasm. The enzyme catalyses GTP + H2O = GDP + phosphate + H(+). Its function is as follows. GTP hydrolase that promotes the GTP-dependent binding of aminoacyl-tRNA to the A-site of ribosomes during protein biosynthesis. This is Elongation factor Tu 2 from Shewanella loihica (strain ATCC BAA-1088 / PV-4).